Consider the following 527-residue polypeptide: Phosphoenolpyruvate carboxykinase (ATP) (527 aa).

3 residues coordinate substrate: arginine 56, tyrosine 191, and lysine 197. ATP is bound by residues lysine 197, histidine 216, and 232-240; that span reads GLSGTGKTT. 2 residues coordinate Mn(2+): lysine 197 and histidine 216. Position 253 (aspartate 253) interacts with Mn(2+). Residues glutamate 281, arginine 318, 437 to 438, and threonine 443 contribute to the ATP site; that span reads RI. Residue arginine 318 coordinates substrate.

This sequence belongs to the phosphoenolpyruvate carboxykinase (ATP) family. Mn(2+) serves as cofactor.

The protein resides in the cytoplasm. It catalyses the reaction oxaloacetate + ATP = phosphoenolpyruvate + ADP + CO2. It functions in the pathway carbohydrate biosynthesis; gluconeogenesis. Functionally, involved in the gluconeogenesis. Catalyzes the conversion of oxaloacetate (OAA) to phosphoenolpyruvate (PEP) through direct phosphoryl transfer between the nucleoside triphosphate and OAA. This Shouchella clausii (strain KSM-K16) (Alkalihalobacillus clausii) protein is Phosphoenolpyruvate carboxykinase (ATP).